Consider the following 71-residue polypeptide: MKKTFYHYMMKHRAALFSNEISNLAEAMYDDLSFPKQSEDYDEISSYLELSGMLESMSIFDEAWDLYIQDR.

It belongs to the UPF0346 family.

This chain is UPF0346 protein BCQ_2236, found in Bacillus cereus (strain Q1).